The sequence spans 361 residues: Probable lipid desaturase ADS3.2, chloroplastic (361 aa).

The N-terminal 57 residues, 1-57 (MMSLSTTLKPLSHFSPFVKRHNPKTNNTLFTLDTHNFTNSFWSKRGGSVSHRKHTVV), are a transit peptide targeting the chloroplast. 2 consecutive transmembrane segments (helical) span residues 99-118 (LVIFVGTHLLSLLAPFYFSW) and 122-139 (WVFPWLVFINGICITLSY). Residues 140–145 (HRNLSH) carry the Histidine box-1 motif. The short motif at 177–181 (HRYHH) is the Histidine box-2 element. A helical transmembrane segment spans residues 246 to 266 (FLFYFCGGMPLLVWGIGITIA). Positions 309–313 (HNNHH) match the Histidine box-3 motif.

It belongs to the fatty acid desaturase type 1 family. It depends on Fe(2+) as a cofactor.

The protein localises to the plastid. It is found in the chloroplast membrane. The protein operates within lipid metabolism; polyunsaturated fatty acid biosynthesis. This is Probable lipid desaturase ADS3.2, chloroplastic from Arabidopsis thaliana (Mouse-ear cress).